The chain runs to 231 residues: Ribonuclease P protein component 3 (231 aa).

Belongs to the eukaryotic/archaeal RNase P protein component 3 family. In terms of assembly, consists of a catalytic RNA component and at least 4-5 protein subunits.

Its subcellular location is the cytoplasm. The enzyme catalyses Endonucleolytic cleavage of RNA, removing 5'-extranucleotides from tRNA precursor.. Part of ribonuclease P, a protein complex that generates mature tRNA molecules by cleaving their 5'-ends. In Methanococcus vannielii (strain ATCC 35089 / DSM 1224 / JCM 13029 / OCM 148 / SB), this protein is Ribonuclease P protein component 3.